The chain runs to 275 residues: Formamidopyrimidine-DNA glycosylase (275 aa).

The active-site Schiff-base intermediate with DNA is the Pro-2. Glu-3 functions as the Proton donor in the catalytic mechanism. Catalysis depends on Lys-58, which acts as the Proton donor; for beta-elimination activity. Residues His-91, Arg-109, and Arg-154 each contribute to the DNA site. Residues 240 to 274 (AVYERAGLPCRVCGAPIRRLVQGQRATYFCPSCQK) form an FPG-type zinc finger. Arg-264 functions as the Proton donor; for delta-elimination activity in the catalytic mechanism.

It belongs to the FPG family. As to quaternary structure, monomer. Zn(2+) serves as cofactor.

The catalysed reaction is Hydrolysis of DNA containing ring-opened 7-methylguanine residues, releasing 2,6-diamino-4-hydroxy-5-(N-methyl)formamidopyrimidine.. It catalyses the reaction 2'-deoxyribonucleotide-(2'-deoxyribose 5'-phosphate)-2'-deoxyribonucleotide-DNA = a 3'-end 2'-deoxyribonucleotide-(2,3-dehydro-2,3-deoxyribose 5'-phosphate)-DNA + a 5'-end 5'-phospho-2'-deoxyribonucleoside-DNA + H(+). Its function is as follows. Involved in base excision repair of DNA damaged by oxidation or by mutagenic agents. Acts as a DNA glycosylase that recognizes and removes damaged bases. Has a preference for oxidized purines, such as 7,8-dihydro-8-oxoguanine (8-oxoG). Has AP (apurinic/apyrimidinic) lyase activity and introduces nicks in the DNA strand. Cleaves the DNA backbone by beta-delta elimination to generate a single-strand break at the site of the removed base with both 3'- and 5'-phosphates. The protein is Formamidopyrimidine-DNA glycosylase of Bordetella parapertussis (strain 12822 / ATCC BAA-587 / NCTC 13253).